We begin with the raw amino-acid sequence, 449 residues long: Lysine-sensitive aspartokinase 3 (449 aa).

The segment at 2–245 (SEIVVSKFGG…AAKRIDEIAF (244 aa)) is aspartokinase. Residue 8–11 (KFGG) participates in ATP binding. Substrate contacts are provided by residues T45, E119, and 198–201 (RGGS). ATP contacts are provided by residues 221–222 (TD), Y227, R232, and 257–258 (KV). Positions 246 to 449 (AEAAEMATFG…VQKLHSNLFE (204 aa)) are interface. A required for homodimerization region spans residues 299 to 449 (FRALALRRNQ…VQKLHSNLFE (151 aa)). Residues 313–394 (LHSLNMLHSR…GLALVALIGN (82 aa)) form the ACT domain. L-lysine contacts are provided by residues M318, S321, 324 to 325 (FL), 338 to 340 (SVD), and 345 to 346 (SE).

It belongs to the aspartokinase family. Homodimer. In the inactive form a homotetramer is formed.

It carries out the reaction L-aspartate + ATP = 4-phospho-L-aspartate + ADP. It participates in amino-acid biosynthesis; L-lysine biosynthesis via DAP pathway; (S)-tetrahydrodipicolinate from L-aspartate: step 1/4. With respect to regulation, synthesis and activity are sensitive to the allosteric inhibitor lysine, one of the end metabolites of the aspartic acid family branched pathway. This is Lysine-sensitive aspartokinase 3 (lysC) from Escherichia coli (strain K12).